We begin with the raw amino-acid sequence, 466 residues long: Ribulose bisphosphate carboxylase large chain (466 aa).

Lysine 4 carries the post-translational modification N6,N6,N6-trimethyllysine. Positions 113 and 163 each coordinate substrate. Lysine 165 acts as the Proton acceptor in catalysis. A substrate-binding site is contributed by lysine 167. Lysine 191, aspartate 193, and glutamate 194 together coordinate Mg(2+). At lysine 191 the chain carries N6-carboxylysine. Histidine 284 serves as the catalytic Proton acceptor. Substrate contacts are provided by arginine 285, histidine 317, and serine 369.

Belongs to the RuBisCO large chain family. Type I subfamily. In terms of assembly, heterohexadecamer of 8 large chains and 8 small chains; disulfide-linked. The disulfide link is formed within the large subunit homodimers. Mg(2+) is required as a cofactor. In terms of processing, the disulfide bond which can form in the large chain dimeric partners within the hexadecamer appears to be associated with oxidative stress and protein turnover.

Its subcellular location is the plastid. It is found in the chloroplast. The catalysed reaction is 2 (2R)-3-phosphoglycerate + 2 H(+) = D-ribulose 1,5-bisphosphate + CO2 + H2O. It carries out the reaction D-ribulose 1,5-bisphosphate + O2 = 2-phosphoglycolate + (2R)-3-phosphoglycerate + 2 H(+). In terms of biological role, ruBisCO catalyzes two reactions: the carboxylation of D-ribulose 1,5-bisphosphate, the primary event in carbon dioxide fixation, as well as the oxidative fragmentation of the pentose substrate in the photorespiration process. Both reactions occur simultaneously and in competition at the same active site. The polypeptide is Ribulose bisphosphate carboxylase large chain (Justicia odora (Water willow)).